A 363-amino-acid polypeptide reads, in one-letter code: DNA repair protein rlp1 (363 aa).

It belongs to the RecA family. RAD51 subfamily. As to quaternary structure, interacts with rdl1 and sws1.

The protein localises to the cytoplasm. It localises to the nucleus. Its function is as follows. Required for normal levels of meiotic recombination. Acts in the recombinational pathway of double-strand break (DSB) repair together with rhp51, rhp55 and rad22. Required for the full extent of DNA recombination and cell survival under condition of a replication fork collapse. This chain is DNA repair protein rlp1, found in Schizosaccharomyces pombe (strain 972 / ATCC 24843) (Fission yeast).